The following is a 131-amino-acid chain: Peptide methionine sulfoxide reductase MsrB (131 aa).

Residues 8–130 (LDEWRSMLDP…NSVCIDLRPR (123 aa)) form the MsrB domain. Residues Cys-47, Cys-50, Cys-96, and Cys-99 each contribute to the Zn(2+) site. Catalysis depends on Cys-119, which acts as the Nucleophile.

Belongs to the MsrB Met sulfoxide reductase family. It depends on Zn(2+) as a cofactor.

The catalysed reaction is L-methionyl-[protein] + [thioredoxin]-disulfide + H2O = L-methionyl-(R)-S-oxide-[protein] + [thioredoxin]-dithiol. The protein is Peptide methionine sulfoxide reductase MsrB of Pseudomonas putida (strain ATCC 47054 / DSM 6125 / CFBP 8728 / NCIMB 11950 / KT2440).